The sequence spans 386 residues: Phosphoglycerate kinase (386 aa).

Substrate is bound by residues 21–23 (DLN), Arg-36, 59–62 (HLGR), Arg-113, and Arg-146. ATP is bound by residues Lys-197, Glu-314, and 340–343 (GGDT).

This sequence belongs to the phosphoglycerate kinase family. As to quaternary structure, monomer.

The protein resides in the cytoplasm. The catalysed reaction is (2R)-3-phosphoglycerate + ATP = (2R)-3-phospho-glyceroyl phosphate + ADP. Its pathway is carbohydrate degradation; glycolysis; pyruvate from D-glyceraldehyde 3-phosphate: step 2/5. In Vibrio vulnificus (strain CMCP6), this protein is Phosphoglycerate kinase.